We begin with the raw amino-acid sequence, 878 residues long: Phosphoenolpyruvate carboxylase (878 aa).

Catalysis depends on residues His-137 and Lys-545.

The protein belongs to the PEPCase type 1 family. The cofactor is Mg(2+).

It carries out the reaction oxaloacetate + phosphate = phosphoenolpyruvate + hydrogencarbonate. In terms of biological role, forms oxaloacetate, a four-carbon dicarboxylic acid source for the tricarboxylic acid cycle. This is Phosphoenolpyruvate carboxylase from Yersinia pestis bv. Antiqua (strain Antiqua).